A 163-amino-acid chain; its full sequence is Photosystem II extrinsic protein V (163 aa).

A signal peptide spans 1 to 26; it reads MFRRLIGVVVATALLTFQLIVGSATA. C63, C66, H67, and H118 together coordinate heme c.

This sequence belongs to the cytochrome c family. PsbV subfamily. PSII is composed of 1 copy each of membrane proteins PsbA, PsbB, PsbC, PsbD, PsbE, PsbF, PsbH, PsbI, PsbJ, PsbK, PsbL, PsbM, PsbT, PsbX, PsbY, PsbZ, Psb30/Ycf12, peripheral proteins PsbO, CyanoQ (PsbQ), PsbU, PsbV and a large number of cofactors. It forms dimeric complexes. Heme c is required as a cofactor.

It is found in the cellular thylakoid membrane. One of the extrinsic, lumenal subunits of photosystem II (PSII). PSII is a light-driven water plastoquinone oxidoreductase, using light energy to abstract electrons from H(2)O, generating a proton gradient subsequently used for ATP formation. The extrinsic proteins stabilize the structure of photosystem II oxygen-evolving complex (OEC), the ion environment of oxygen evolution and protect the OEC against heat-induced inactivation. Low-potential cytochrome c that plays a role in the OEC of PSII. This chain is Photosystem II extrinsic protein V, found in Nostoc sp. (strain PCC 7120 / SAG 25.82 / UTEX 2576).